The following is a 248-amino-acid chain: 3-deoxy-manno-octulosonate cytidylyltransferase (248 aa).

The protein belongs to the KdsB family.

It is found in the cytoplasm. It catalyses the reaction 3-deoxy-alpha-D-manno-oct-2-ulosonate + CTP = CMP-3-deoxy-beta-D-manno-octulosonate + diphosphate. It participates in nucleotide-sugar biosynthesis; CMP-3-deoxy-D-manno-octulosonate biosynthesis; CMP-3-deoxy-D-manno-octulosonate from 3-deoxy-D-manno-octulosonate and CTP: step 1/1. Its pathway is bacterial outer membrane biogenesis; lipopolysaccharide biosynthesis. In terms of biological role, activates KDO (a required 8-carbon sugar) for incorporation into bacterial lipopolysaccharide in Gram-negative bacteria. The polypeptide is 3-deoxy-manno-octulosonate cytidylyltransferase (Christiangramia forsetii (strain DSM 17595 / CGMCC 1.15422 / KT0803) (Gramella forsetii)).